A 243-amino-acid polypeptide reads, in one-letter code: Uridylate kinase (243 aa).

Residue 12-15 (KLSG) coordinates ATP. Residues 20 to 25 (GAKGFG) are involved in allosteric activation by GTP. The ATP site is built by Gly55 and Arg59. Residues Asp74 and 135 to 142 (TGNPYFTT) contribute to the UMP site. ATP-binding residues include Gln163, Tyr169, and Asp172.

Belongs to the UMP kinase family. As to quaternary structure, homohexamer.

Its subcellular location is the cytoplasm. The enzyme catalyses UMP + ATP = UDP + ADP. The protein operates within pyrimidine metabolism; CTP biosynthesis via de novo pathway; UDP from UMP (UMPK route): step 1/1. Allosterically activated by GTP. Inhibited by UTP. In terms of biological role, catalyzes the reversible phosphorylation of UMP to UDP. The polypeptide is Uridylate kinase (Symbiobacterium thermophilum (strain DSM 24528 / JCM 14929 / IAM 14863 / T)).